The following is a 519-amino-acid chain: 2-isopropylmalate synthase (519 aa).

The Pyruvate carboxyltransferase domain occupies 12 to 274 (VVIFDTTLRD…WCNVESTTLT (263 aa)). Residues Asp-21, His-209, His-211, and Asn-245 each coordinate Mn(2+). The segment at 398–519 (RLVSLTVIAG…QREAPVAAAS (122 aa)) is regulatory domain.

The protein belongs to the alpha-IPM synthase/homocitrate synthase family. LeuA type 1 subfamily. Homodimer. Requires Mn(2+) as cofactor.

Its subcellular location is the cytoplasm. It catalyses the reaction 3-methyl-2-oxobutanoate + acetyl-CoA + H2O = (2S)-2-isopropylmalate + CoA + H(+). It participates in amino-acid biosynthesis; L-leucine biosynthesis; L-leucine from 3-methyl-2-oxobutanoate: step 1/4. Functionally, catalyzes the condensation of the acetyl group of acetyl-CoA with 3-methyl-2-oxobutanoate (2-ketoisovalerate) to form 3-carboxy-3-hydroxy-4-methylpentanoate (2-isopropylmalate). In Afipia carboxidovorans (strain ATCC 49405 / DSM 1227 / KCTC 32145 / OM5) (Oligotropha carboxidovorans), this protein is 2-isopropylmalate synthase.